Consider the following 197-residue polypeptide: PPMTTETAHISVVSREGDAVVVTTTINYWFGSGLRSPSTGVILNDEMDDFSAHDIQNIYGVPPSKANFIVPGKRPQSSTCPSIFVNEGGDVVMAIGASGGTRITSSVSLTSMRVLWLGRNIKEAIDEPRLHHQLLPDEIEYEFKFPNEILEKLKAIGHKTKPAGAFGSLVVGIKRMKGGTLTANYDYRRGGSVDGFK.

An N-terminal signal peptide occupies residues 1–6; that stretch reads PPMTTE.

Expressed by the venom gland.

The protein resides in the secreted. Its function is as follows. May act as a voltage-gated potassium channel inhibitor. Is highly similar to the subunit beta of SSD14 which, when complexed with subunit alpha, induces platelet aggregation and hemolysis. The polypeptide is Scoloptoxin SSD20 (Scolopendra dehaani (Thai centipede)).